Reading from the N-terminus, the 2448-residue chain is Cysteine repeat modular protein 1 (2448 aa).

Residues threonine 9–cysteine 29 traverse the membrane as a helical segment. N-linked (GlcNAc...) asparagine glycosylation is found at asparagine 48, asparagine 89, asparagine 248, asparagine 284, asparagine 461, asparagine 503, asparagine 542, asparagine 598, and asparagine 619. FU repeat units follow at residues lysine 431–phenylalanine 481, phenylalanine 485–isoleucine 530, asparagine 535–serine 566, and serine 567–alanine 611. 10 FU repeats span residues asparagine 645–proline 694, threonine 698–glutamine 727, aspartate 728–glycine 772, glutamine 775–asparagine 813, lysine 819–serine 868, glycine 904–aspartate 947, glutamine 950–alanine 983, asparagine 984–proline 1027, glutamine 1063–valine 1109, and glutamine 1113–leucine 1144. 2 N-linked (GlcNAc...) asparagine glycosylation sites follow: asparagine 761 and asparagine 812. N-linked (GlcNAc...) asparagine glycosylation is present at asparagine 934. The N-linked (GlcNAc...) asparagine glycan is linked to asparagine 1002. The N-linked (GlcNAc...) asparagine glycan is linked to asparagine 1146. Residues glutamine 1147 to leucine 1193 form an FU 15 repeat. Residue asparagine 1194 is glycosylated (N-linked (GlcNAc...) asparagine). 5 FU repeats span residues asparagine 1197–glutamine 1232, glycine 1234–serine 1279, lysine 1281–glutamine 1332, serine 1346–leucine 1394, and asparagine 1402–glutamine 1436. Residues asparagine 1296, asparagine 1328, and asparagine 1365 are each glycosylated (N-linked (GlcNAc...) asparagine). Asparagine 1506, asparagine 1601, asparagine 1628, and asparagine 1670 each carry an N-linked (GlcNAc...) asparagine glycan. Positions serine 1739–glutamine 1773 constitute an EGF-like domain. Disulfide bonds link cysteine 1743–cysteine 1754, cysteine 1748–cysteine 1761, and cysteine 1763–cysteine 1772. N-linked (GlcNAc...) asparagine glycosylation is found at asparagine 1800, asparagine 1849, asparagine 1877, asparagine 1942, asparagine 2117, asparagine 2155, and asparagine 2179. A run of 2 helical transmembrane segments spans residues leucine 2201–isoleucine 2221 and isoleucine 2238–valine 2258. A glycan (N-linked (GlcNAc...) asparagine) is linked at asparagine 2260. 4 helical membrane passes run serine 2267 to phenylalanine 2287, isoleucine 2296 to valine 2316, methionine 2352 to cysteine 2372, and alanine 2386 to glycine 2406.

The protein localises to the membrane. In terms of biological role, required for mucocyst secretion. The chain is Cysteine repeat modular protein 1 from Tetrahymena thermophila (strain SB210).